The chain runs to 210 residues: 3-hexulose-6-phosphate synthase (210 aa).

Belongs to the HPS/KGPDC family. HPS subfamily.

It carries out the reaction D-ribulose 5-phosphate + formaldehyde = D-arabino-hex-3-ulose 6-phosphate. It participates in one-carbon metabolism; formaldehyde assimilation via RuMP pathway; D-fructose 6-phosphate from D-ribulose 5-phosphate and formaldehyde: step 1/2. In terms of biological role, catalyzes the condensation of ribulose 5-phosphate with formaldehyde to form 3-hexulose 6-phosphate. The protein is 3-hexulose-6-phosphate synthase of Staphylococcus haemolyticus (strain JCSC1435).